A 628-amino-acid chain; its full sequence is tRNA uridine 5-carboxymethylaminomethyl modification enzyme MnmG (628 aa).

Residue 14–19 (GAGHAG) coordinates FAD. 273–287 (GPRYCPSIEDKVVRF) is a binding site for NAD(+).

The protein belongs to the MnmG family. In terms of assembly, homodimer. Heterotetramer of two MnmE and two MnmG subunits. The cofactor is FAD.

The protein resides in the cytoplasm. In terms of biological role, NAD-binding protein involved in the addition of a carboxymethylaminomethyl (cmnm) group at the wobble position (U34) of certain tRNAs, forming tRNA-cmnm(5)s(2)U34. The protein is tRNA uridine 5-carboxymethylaminomethyl modification enzyme MnmG of Bacillus velezensis (strain DSM 23117 / BGSC 10A6 / LMG 26770 / FZB42) (Bacillus amyloliquefaciens subsp. plantarum).